Reading from the N-terminus, the 420-residue chain is Mannose-1-phosphate guanylyltransferase regulatory subunit alpha (420 aa).

A substrate-binding domain region spans residues 2-251 (LKAVILIGGP…DGIWSQIKSA (250 aa)). The GDP-alpha-D-mannose site is built by Glu85 and Gln247. The interval 273–420 (LAKHTPGGPR…SRSFTNQIIL (148 aa)) is hexapeptide repeat domain. The interval 356–384 (TPNDPNPNDPRARMDSESLFKDGKLLPAI) is C-loop.

It belongs to the transferase hexapeptide repeat family. In terms of assembly, component of the GMPPA-GMPPB mannose-1-phosphate guanylyltransferase complex composed of 4 GMPPA subunits and 8 GMPPB subunits; the complex is organized into three layers, a central layer made up of 2 GMPPA dimers sandwiched between two layers each made up of 2 GMPPB dimers.

The protein resides in the cytoplasm. Regulatory subunit of the GMPPA-GMPPB mannose-1-phosphate guanylyltransferase complex; reduces the catalytic activity of GMPPB when part of the complex. Mediates allosteric feedback inhibition of GMPPB catalytic activity upon binding GDP-alpha-D-mannose. Together with GMPPB regulates GDP-alpha-D-mannose levels. The sequence is that of Mannose-1-phosphate guanylyltransferase regulatory subunit alpha (GMPPA) from Papio anubis (Olive baboon).